Consider the following 423-residue polypeptide: Glucose-1-phosphate adenylyltransferase (423 aa).

Residues Y100, G165, 180–181 (EK), and S191 contribute to the alpha-D-glucose 1-phosphate site.

Belongs to the bacterial/plant glucose-1-phosphate adenylyltransferase family. As to quaternary structure, homotetramer.

The catalysed reaction is alpha-D-glucose 1-phosphate + ATP + H(+) = ADP-alpha-D-glucose + diphosphate. Its pathway is glycan biosynthesis; glycogen biosynthesis. Involved in the biosynthesis of ADP-glucose, a building block required for the elongation reactions to produce glycogen. Catalyzes the reaction between ATP and alpha-D-glucose 1-phosphate (G1P) to produce pyrophosphate and ADP-Glc. The polypeptide is Glucose-1-phosphate adenylyltransferase (Lachnospira eligens (strain ATCC 27750 / DSM 3376 / VPI C15-48 / C15-B4) (Eubacterium eligens)).